Reading from the N-terminus, the 258-residue chain is Short-chain dehydrogenase/reductase FrzI (258 aa).

3 residues coordinate NADP(+): Ile21, Asn41, and Asn94. Active-site proton donor residues include Ser143 and Ser144. 4 residues coordinate NADP(+): Tyr157, Lys161, Val191, and Thr193. Tyr157 serves as the catalytic Proton acceptor. Residue Lys161 is the Lowers pKa of active site Tyr of the active site.

Belongs to the short-chain dehydrogenases/reductases (SDR) family.

It catalyses the reaction (1S,3S,6S,7S,8R)-7-hydroxy-6-[(4-methoxyphenyl)methyl]-3-(methylamino)-5-azatricyclo[6.3.1.0(1,5)]dodecan-9-one + NADPH + H(+) = (1S,3S,6S,7S,8S,9S)-6-[(4-methoxyphenyl)methyl]-3-(methylamino)-5-azatricyclo[6.3.1.0(1,5)]dodecane-7,9-diol + NADP(+). The protein operates within secondary metabolite biosynthesis. Its function is as follows. Short-chain dehydrogenase/reductase; part of the gene cluster that mediates the biosynthesis of the alkaloid (-)-FR901483, a potent immunosuppressant that shows efficacy in animal models and a probable inhibitor of purine nucleotide biosynthesis by targeting phosphoribosylpyrophosphate amidotransferase (PPAT). Within the pathway, FrzI catalyzes the formation of dephospho-(-)-FR901483 from the aza-tricyclic intermediate produced by FrzH. The biosynthesis of (-)-FR901483 starts with the condensation of two L-tyrosines to yield (S,S)-dityrosyl-piperazine. This process occurs in 3 steps with the non-canonical nonribosomal peptide synthetase FrzA catalyzing the reduction of L-tyrosine into L-tyrosinal, the spontaneous condensation of 2 L-tyrosinal units, and the subsequent reduction by the NmrA-like family domain-containing oxidoreductase FrzB. The cytochrome P450 monooxygenase FrzC then performs coupling between N10 and C1' to morph the piperazine into a 1,4-diazabicyclo[3.2.1]octane spiro-fused to a 2,5-cyclohexadienone. The dienone portion is further reduced to cyclohexanone by the flavin-dependent reductase FrzD. The methyltranserases (MTs) FrzE and FrzF are then involved in the methylation at the C10' amine and the C4 phenolic oxygen, respectively. The order of the two MTs appear to be interchangeable. Cleavage of the C9-N10' bond by the dioxygenase FrzG then leads to formation of a conjugated iminium. In addition to the oxidation of C9, an additional dehydrogenation between C7 and C8 can occur to give a likely shunt product. The next biosynthetic step is the intramolecular aldol condensation catalyzed by the newly identified aldolase FrzH to yield an aza-tricyclic product with the formation of a C9-C3' bond. The short-chain dehydrogenase/reductase FrzI then produces dephospho-(-)-FR901483 that is phosphorylated at C4'-OH into (-)-FR901483 by the phosphotransferase FrzJ. This chain is Short-chain dehydrogenase/reductase FrzI, found in Cladobotryum sp.